The primary structure comprises 131 residues: MSWQTYVDEHLMCEIEGLHLASTAIIGHAGTVWAQSTAFPQFKPEEITGIMKDFDEPGHLAPTGMFVAGAKYMVIQGEPGAVIRGKKGAGGITIKKTGQALVVGIYDEPMTPGQCNMVVERLGDYLLEQGL.

A disulfide bridge links cysteine 13 with cysteine 115. An Involved in PIP2 interaction motif is present at residues alanine 81–threonine 97. Position 111 is a phosphothreonine (threonine 111).

This sequence belongs to the profilin family. In terms of assembly, occurs in many kinds of cells as a complex with monomeric actin in a 1:1 ratio. Phosphorylated by MAP kinases.

It is found in the cytoplasm. It localises to the cytoskeleton. Its function is as follows. Binds to actin and affects the structure of the cytoskeleton. At high concentrations, profilin prevents the polymerization of actin, whereas it enhances it at low concentrations. The chain is Profilin-3 from Olea europaea (Common olive).